The chain runs to 410 residues: Peptidase T (410 aa).

Position 78 (His78) interacts with Zn(2+). Asp80 is an active-site residue. Residue Asp140 coordinates Zn(2+). The Proton acceptor role is filled by Glu173. Residues Glu174, Asp196, and His379 each coordinate Zn(2+).

The protein belongs to the peptidase M20B family. It depends on Zn(2+) as a cofactor.

It is found in the cytoplasm. It carries out the reaction Release of the N-terminal residue from a tripeptide.. Functionally, cleaves the N-terminal amino acid of tripeptides. The sequence is that of Peptidase T from Pectobacterium atrosepticum (strain SCRI 1043 / ATCC BAA-672) (Erwinia carotovora subsp. atroseptica).